Reading from the N-terminus, the 91-residue chain is Large ribosomal subunit protein uL29 (91 aa).

A disordered region spans residues 67-91; the sequence is AAPLAESSAPAKTKSRARKSKKEAL. The segment covering 79–91 has biased composition (basic residues); the sequence is TKSRARKSKKEAL.

Belongs to the universal ribosomal protein uL29 family.

The chain is Large ribosomal subunit protein uL29 from Acidobacterium capsulatum (strain ATCC 51196 / DSM 11244 / BCRC 80197 / JCM 7670 / NBRC 15755 / NCIMB 13165 / 161).